Here is a 197-residue protein sequence, read N- to C-terminus: Protein Hikeshi (197 aa).

Residues 18–55 (VAEDKFVFDLPDYESINHVVVFMLGTIPFPEGMGGSVY) form a required for F-X-F-G repeats-nucleoporins recognition and nuclear import region. A flexible linker region involved in nuclear import of HSP70 proteins region spans residues 124–134 (QTPVGNAAVSS).

This sequence belongs to the OPI10 family. As to quaternary structure, forms an asymmetric homodimer; required for binding and nuclear import of HSP70 proteins. Interacts with ATP-bound HSP70 proteins. Interacts with NUP62 and NUP153 (via F-X-F-G repeats). Interacts with HSPA8.

The protein resides in the cytoplasm. Its subcellular location is the cytosol. The protein localises to the nucleus. In terms of biological role, acts as a specific nuclear import carrier for HSP70 proteins following heat-shock stress: acts by mediating the nucleoporin-dependent translocation of ATP-bound HSP70 proteins into the nucleus. HSP70 proteins import is required to protect cells from heat shock damages. Does not translocate ADP-bound HSP70 proteins into the nucleus. The polypeptide is Protein Hikeshi (Homo sapiens (Human)).